We begin with the raw amino-acid sequence, 269 residues long: Cyclic AMP-dependent transcription factor ATF-1 (269 aa).

The disordered stretch occupies residues 1-90 (MEDSHKSNTT…GEGENPSISA (90 aa)). A compositionally biased stretch (polar residues) spans 9 to 18 (TTETASQPGS). The 60-residue stretch at 31–90 (QVSSLSESEESQDSSDSIGSSQKAHGILARRPSYRKILKDLSSEDTRGRKGEGENPSISA) folds into the KID domain. S63 is subject to Phosphoserine; by CaMK1, CDK3, RPS6KA4 and RPS6KA5. The span at 67–83 (ILKDLSSEDTRGRKGEG) shows a compositional bias: basic and acidic residues. The residue at position 196 (S196) is a Phosphoserine; by HIPK2. Residue K206 forms a Glycyl lysine isopeptide (Lys-Gly) (interchain with G-Cter in SUMO2) linkage. The 59-residue stretch at 211–269 (QLRREIRLMKNREAARECRRKKKEYVKCLENRVAVLENQNKTLIEELKTLKDLYSHKSV) folds into the bZIP domain. The interval 213–237 (RREIRLMKNREAARECRRKKKEYVK) is basic motif. The segment at 239 to 260 (LENRVAVLENQNKTLIEELKTL) is leucine-zipper.

Belongs to the bZIP family. ATF subfamily. As to quaternary structure, binds DNA as a dimer. Interacts with HIPK2 and CDK3. Interacts with MOTS-c, a peptide produced by the mitochondrially encoded 12S rRNA MT-RNR1; the interaction occurs in the nucleus following metabolic stress. In terms of processing, phosphorylated at Ser-196 by HIPK2 in response to genotoxic stress. This phosphorylation promotes transcription repression of FTH1 and other antioxidant detoxification genes. The CDK3-mediated phosphorylation at Ser-63 promotes its transactivation and transcriptional activities. Phosphorylated at Ser-63 by RPS6KA4 and RPS6KA5 in response to mitogenic or stress stimuli.

It is found in the nucleus. Binds the cAMP response element (CRE) (consensus: 5'-GTGACGT[AC][AG]-3'), a sequence present in many viral and cellular promoters. Binds to the Tax-responsive element (TRE) of HTLV-I. Mediates PKA-induced stimulation of CRE-reporter genes. Represses the expression of FTH1 and other antioxidant detoxification genes. Triggers cell proliferation and transformation. The chain is Cyclic AMP-dependent transcription factor ATF-1 (Atf1) from Mus musculus (Mouse).